Here is a 215-residue protein sequence, read N- to C-terminus: Nucleoside triphosphate pyrophosphatase (215 aa).

The active-site Proton acceptor is the aspartate 80.

This sequence belongs to the Maf family. A divalent metal cation is required as a cofactor.

Its subcellular location is the cytoplasm. The catalysed reaction is a ribonucleoside 5'-triphosphate + H2O = a ribonucleoside 5'-phosphate + diphosphate + H(+). It carries out the reaction a 2'-deoxyribonucleoside 5'-triphosphate + H2O = a 2'-deoxyribonucleoside 5'-phosphate + diphosphate + H(+). In terms of biological role, nucleoside triphosphate pyrophosphatase. May have a dual role in cell division arrest and in preventing the incorporation of modified nucleotides into cellular nucleic acids. This Leifsonia xyli subsp. xyli (strain CTCB07) protein is Nucleoside triphosphate pyrophosphatase.